Consider the following 115-residue polypeptide: Protein Wnt-2 (115 aa).

Serine 1 carries the O-palmitoleoyl serine; by PORCN lipid modification. Cysteine 81 and cysteine 96 are joined by a disulfide. The N-linked (GlcNAc...) asparagine glycan is linked to asparagine 82.

This sequence belongs to the Wnt family. Palmitoleoylation is required for efficient binding to frizzled receptors. Depalmitoleoylation leads to Wnt signaling pathway inhibition.

It is found in the secreted. Its subcellular location is the extracellular space. The protein resides in the extracellular matrix. Functionally, ligand for members of the frizzled family of seven transmembrane receptors. Probable developmental protein. May be a signaling molecule which affects the development of discrete regions of tissues. Is likely to signal over only few cell diameters. This is Protein Wnt-2 (WNT-2) from Strongylocentrotus purpuratus (Purple sea urchin).